The primary structure comprises 481 residues: Ammonium transporter 2 member 3 (481 aa).

Residues 1–36 (MNFNSSKYISHLPESLLPNDASPEWNNKADNAWQLT) are Extracellular-facing. Asn4 carries N-linked (GlcNAc...) asparagine glycosylation. The chain crosses the membrane as a helical span at residues 37–57 (AATLVGLQTVPGLVILYGSMV). Topologically, residues 58-62 (KKKWA) are cytoplasmic. Residues 63–83 (VNSAFMALYAFAAVLVCWVLW) traverse the membrane as a helical segment. Over 84 to 123 (AHHMAFGTKLLPFVGKPNFALSQKFLLSKASTNYYLPMAD) the chain is Extracellular. A helical membrane pass occupies residues 124 to 144 (FVFYQFAFAAITLVLLGGSLL). Residues 145-151 (GRMNFYA) are Cytoplasmic-facing. Residues 152 to 172 (WMLFVPLWLTLSYTVGAFTIW) traverse the membrane as a helical segment. Residues 173–184 (GNGFLEGKIIDY) lie on the Extracellular side of the membrane. Residues 185–205 (AGGFVIHLSSGVAGFTAAYWV) form a helical membrane-spanning segment. Residues 206–220 (GPRTSNDRQNFPPNN) are Cytoplasmic-facing. The chain crosses the membrane as a helical span at residues 221–241 (IIHMLGGAGFLWMGWTGFNGG). Topologically, residues 242–248 (APFQVGE) are extracellular. The chain crosses the membrane as a helical span at residues 249–269 (ITSLAIFNTHLCTATSILVWI). Topologically, residues 270–281 (SLDMAVYKKGSL) are cytoplasmic. A helical membrane pass occupies residues 282–302 (IGSVQGMMTGLVCITPGAGLV). At 303–304 (DP) the chain is on the extracellular side. Residues 305–325 (WAAILMGALSGSIPWYTMMVL) form a helical membrane-spanning segment. Residues 326 to 338 (HKKSPFFQSVDDT) lie on the Cytoplasmic side of the membrane. Residues 339-359 (LGVFHTHAVAGILGGILSGVF) traverse the membrane as a helical segment. Topologically, residues 360 to 363 (AKPK) are extracellular. The chain crosses the membrane as a helical span at residues 364–381 (LLRILYGPYGSGLLYSYF). At 382–395 (DDNIGQGIKQMWYQ) the chain is on the cytoplasmic side. The chain crosses the membrane as a helical span at residues 396–416 (LLGAVFITIWNVVITSLICIL). Topologically, residues 417–481 (LNRFVNLRMQ…HSFPINKIDE (65 aa)) are extracellular.

Belongs to the ammonia transporter channel (TC 1.A.11.2) family. Mostly expressed in mycorrhizal roots. Also observed in the cortex and endodermis of non-mycorrhizal roots.

It is found in the cell membrane. Involved in ammonium transport. Required for arbuscular mycorrhizal (AM) symbiosis with AM fungi (e.g. Glomus versiforme and G.intraradices) in low nitrogen conditions. This Medicago truncatula (Barrel medic) protein is Ammonium transporter 2 member 3.